The following is a 1147-amino-acid chain: Lon protease homolog 2, peroxisomal (1147 aa).

The region spanning 20 to 348 (LPTYKLDSNL…EVNRMLESMI (329 aa)) is the Lon N-terminal domain. 2 disordered regions span residues 395-444 (KPDK…DDDD) and 561-626 (KIES…SLTT). Positions 427-444 (DGNESNDEYDDDEDDDDD) are enriched in acidic residues. Composition is skewed to basic and acidic residues over residues 561-574 (KIESENSKKSKKNE) and 582-597 (KNDKQRSEKTFTRSDD). 651–658 (GPPGTGKT) serves as a coordination point for ATP. Positions 903–1131 (SAKCGVVNGL…WDVIKAVWGD (229 aa)) constitute a Lon proteolytic domain. Catalysis depends on residues S1006 and K1049.

It belongs to the peptidase S16 family.

The protein localises to the peroxisome matrix. The enzyme catalyses Hydrolysis of proteins in presence of ATP.. In terms of biological role, ATP-dependent serine protease that mediates the selective degradation of misfolded and unassembled polypeptides in the peroxisomal matrix. Necessary for type 2 peroxisome targeting signal (PTS2)-containing protein processing and facilitates peroxisome matrix protein import. This chain is Lon protease homolog 2, peroxisomal, found in Debaryomyces hansenii (strain ATCC 36239 / CBS 767 / BCRC 21394 / JCM 1990 / NBRC 0083 / IGC 2968) (Yeast).